Consider the following 333-residue polypeptide: Putative pectinesterase 14 (333 aa).

The N-terminal stretch at 1–16 (MLFFILFLSIISPIES) is a signal peptide. N-linked (GlcNAc...) asparagine glycans are attached at residues N108 and N114. Substrate is bound at residue T116. N133 carries N-linked (GlcNAc...) asparagine glycosylation. Residue Q151 participates in substrate binding. The Proton donor role is filled by D174. Catalysis depends on D195, which acts as the Nucleophile. Residue R253 coordinates substrate. Residues N302 and N323 are each glycosylated (N-linked (GlcNAc...) asparagine).

This sequence belongs to the pectinesterase family. As to expression, expressed in flower buds.

Its subcellular location is the secreted. The protein resides in the cell wall. The catalysed reaction is [(1-&gt;4)-alpha-D-galacturonosyl methyl ester](n) + n H2O = [(1-&gt;4)-alpha-D-galacturonosyl](n) + n methanol + n H(+). Its pathway is glycan metabolism; pectin degradation; 2-dehydro-3-deoxy-D-gluconate from pectin: step 1/5. In terms of biological role, acts in the modification of cell walls via demethylesterification of cell wall pectin. This chain is Putative pectinesterase 14 (PME14), found in Arabidopsis thaliana (Mouse-ear cress).